The primary structure comprises 1043 residues: Unconventional myosin-Ia (1043 aa).

Residues 8 to 694 (VGVEDLILLE…TLFYLEEQRR (687 aa)) enclose the Myosin motor domain. 101-108 (GESGAGKT) contributes to the ATP binding site. The interval 571–593 (VAVLMKNLYSKNPNYIRCIKPND) is actin-binding. IQ domains follow at residues 697-719 (LQQLATLIQKVYRGWRCRTHYQQ), 720-742 (MRKSQILISAWFRGNKQKKHYGK), and 743-772 (IRSSVLLIQAFVRGWRARKNYRKYFRSGAA). Residues 858–1042 (KASYPQSVPI…KGSNAMEVTV (185 aa)) enclose the TH1 domain.

The protein belongs to the TRAFAC class myosin-kinesin ATPase superfamily. Myosin family. In terms of processing, phosphorylated by ALPK1.

Functionally, involved in directing the movement of organelles along actin filaments. This Mus musculus (Mouse) protein is Unconventional myosin-Ia (Myo1a).